Reading from the N-terminus, the 286-residue chain is Bark agglutinin I polypeptide B (286 aa).

Residues 1-31 (MASYKFKTQNSFLLLLSISFFFLLLLNKVNS) form the signal peptide. Residue asparagine 148 is glycosylated (N-linked (GlcNAc...) asparagine). 2 residues coordinate Mn(2+): glutamate 157 and aspartate 159. Ca(2+)-binding residues include aspartate 159, asparagine 163, and aspartate 167. 2 residues coordinate Mn(2+): aspartate 167 and histidine 172.

Belongs to the leguminous lectin family. RPbAI is composed of two polypeptides, A and B, that associate into five different tetrameric isolectins. The A4 combination is the only one devoid of agglutination activity. Isoform B4 displays maximal agglutination activity. In terms of tissue distribution, mostly in the axial and ray parenchymal cells of the inner bark. Fewer in the axial and ray parenchymal cells of the xylem. Strong expression in bark. The lectin accumulates in the inner bark in autumn and winter and disappears in may.

Its function is as follows. Bark lectins are storage proteins that probably maintain stocks of nitrogen during dormant period. Self-aggregatable molecules that can bind their own carbohydrate side chains. They could also play a role in the plant's defense against phytophagous invertebrates or herbivorous higher animals. In Robinia pseudoacacia (Black locust), this protein is Bark agglutinin I polypeptide B.